The chain runs to 418 residues: Mitochondrial outer membrane protein SLC25A46 (418 aa).

Positions 1–30 are disordered; that stretch reads MHPRRPDGFDGLGYRGGARDEQGFGGAFPA. Ser-32 is modified (phosphoserine). The interval 44–93 is disordered; the sequence is TTPPDIPGSRNLHWGEKSPPYGVPTTSTPYEGPTEEPFSSGGGGSVQGQS. Thr-45 carries the phosphothreonine modification. A Solcar 1 repeat occupies 96–187; sequence QLNRFAGFGI…GIISEFTPLP (92 aa). The next 6 helical transmembrane spans lie at 103 to 123, 167 to 187, 202 to 222, 258 to 278, 314 to 334, and 382 to 402; these read FGIG…CIVL, FIVQ…TPLP, HLLL…ASLI, LLPL…HYII, FPEL…LYPL, and VFGF…HAAV. Residues 311–413 form a Solcar 2 repeat; the sequence is DAYFPELIAN…QITKIIYSTL (103 aa).

Belongs to the mitochondrial carrier (TC 2.A.29) family. As to quaternary structure, associates with the mitochondrial contact site and cristae organizing system (MICOS) complex. May associate with the endoplasmic reticulum membrane protein complex (EMC).

The protein resides in the mitochondrion outer membrane. Transmembrane protein of the mitochondrial outer membrane that controls mitochondrial organization. May regulate the assembly of the MICOS (mitochondrial contact site and cristae organizing system) complex which is essential to the biogenesis and dynamics of mitochondrial cristae, the inwards folds of the inner mitochondrial membrane. Through its interaction with the EMC (endoplasmic reticulum membrane protein complex), could regulate mitochondrial lipid homeostasis and thereby mitochondrial fission. In Homo sapiens (Human), this protein is Mitochondrial outer membrane protein SLC25A46.